A 367-amino-acid chain; its full sequence is Uroporphyrinogen decarboxylase (367 aa).

Substrate contacts are provided by residues 27–31, D77, Y157, T212, and H333; that span reads RQAGR.

It belongs to the uroporphyrinogen decarboxylase family. In terms of assembly, homodimer.

The protein resides in the cytoplasm. The catalysed reaction is uroporphyrinogen III + 4 H(+) = coproporphyrinogen III + 4 CO2. Its pathway is porphyrin-containing compound metabolism; protoporphyrin-IX biosynthesis; coproporphyrinogen-III from 5-aminolevulinate: step 4/4. Functionally, catalyzes the decarboxylation of four acetate groups of uroporphyrinogen-III to yield coproporphyrinogen-III. This Cupriavidus metallidurans (strain ATCC 43123 / DSM 2839 / NBRC 102507 / CH34) (Ralstonia metallidurans) protein is Uroporphyrinogen decarboxylase.